Consider the following 455-residue polypeptide: Ribulose bisphosphate carboxylase large chain (455 aa).

Position 5 is an N6,N6,N6-trimethyllysine (K5). N114 and T164 together coordinate substrate. Catalysis depends on K166, which acts as the Proton acceptor. K168 lines the substrate pocket. Residues K192, D194, and E195 each contribute to the Mg(2+) site. An N6-carboxylysine modification is found at K192. The Proton acceptor role is filled by H285. Residues R286, H318, and S370 each contribute to the substrate site.

The protein belongs to the RuBisCO large chain family. Type I subfamily. Heterohexadecamer of 8 large chains and 8 small chains. Requires Mg(2+) as cofactor.

It is found in the plastid. The protein resides in the chloroplast. It catalyses the reaction 2 (2R)-3-phosphoglycerate + 2 H(+) = D-ribulose 1,5-bisphosphate + CO2 + H2O. The enzyme catalyses D-ribulose 1,5-bisphosphate + O2 = 2-phosphoglycolate + (2R)-3-phosphoglycerate + 2 H(+). Its function is as follows. RuBisCO catalyzes two reactions: the carboxylation of D-ribulose 1,5-bisphosphate, the primary event in carbon dioxide fixation, as well as the oxidative fragmentation of the pentose substrate in the photorespiration process. Both reactions occur simultaneously and in competition at the same active site. The protein is Ribulose bisphosphate carboxylase large chain of Tamarindus indica (Tamarind).